Consider the following 872-residue polypeptide: Facilitated trehalose transporter Tret1 (872 aa).

Disordered stretches follow at residues 1-40, 53-217, 262-281, and 293-315; these read MSGR…LKEK, VESN…KATS, SSSE…RKHQ, and KVLQ…KRLI. Topologically, residues 1 to 406 are cytoplasmic; the sequence is MSGRDNRGAG…VYRPTTNPIY (406 aa). A compositionally biased stretch (gly residues) spans 8–22; it reads GAGGGGGGGGGGSGG. Low complexity-rich tracts occupy residues 55 to 68, 84 to 98, and 121 to 132; these read SNLS…SLDT, RHPQ…QQQR, and PPTQQQPQQQHQ. Residues serine 262, serine 263, and serine 264 each carry the phosphoserine modification. Residues serine 334 and serine 336 each carry the phosphoserine modification. The interval 340–361 is disordered; sequence FLTSRQHFQQQRSISTDSRKSR. Positions 344–355 are enriched in polar residues; that stretch reads RQHFQQQRSIST. The chain crosses the membrane as a helical span at residues 407-427; the sequence is IWTQVLAALSVSLGSLVVGFV. Residues 428 to 454 are Extracellular-facing; it reads SAYTSPALITMTNGNITSFEVTPQAAS. An N-linked (GlcNAc...) asparagine glycan is attached at asparagine 442. A helical membrane pass occupies residues 455–475; it reads WVGGIMPLAGLLGGIAGGPFI. Topologically, residues 476–488 are cytoplasmic; that stretch reads EYLGRRNTILTTA. Residues 489 to 509 traverse the membrane as a helical segment; the sequence is VPFIVSSLLIACAVNITMVLL. The Extracellular segment spans residues 510–511; sequence GR. A helical transmembrane segment spans residues 512-532; the sequence is FLAGFCVGIASLSLPVYLGET. Residues 533–538 are Cytoplasmic-facing; it reads VQPEVR. The helical transmembrane segment at 539–559 threads the bilayer; that stretch reads GTLGLLPTAFGNIGILLCFVA. Residues 560-566 lie on the Extracellular side of the membrane; it reads GTYMDWS. Residues 567 to 587 form a helical membrane-spanning segment; the sequence is MLAFLGAALPVPFLILMFLIP. The Cytoplasmic portion of the chain corresponds to 588–650; that stretch reads ETPRWYVSRG…ELLKRNNLKP (63 aa). Residues 651–671 form a helical membrane-spanning segment; that stretch reads LSISLGLMFFQQLSGINAVIF. The Extracellular portion of the chain corresponds to 672-687; it reads YTVQIFKDAGSTIDGN. The chain crosses the membrane as a helical span at residues 688–708; the sequence is VCTIIVGIVNFMATFIGIILI. Topologically, residues 709–714 are cytoplasmic; the sequence is DRAGRK. The chain crosses the membrane as a helical span at residues 715 to 735; sequence ILLYVSNVAMIITLFVLGGFF. Topologically, residues 736-755 are extracellular; that stretch reads YCKDKAGIDVSNVGWLPLSC. The chain crosses the membrane as a helical span at residues 756–776; it reads FVVYILGFSLGFGPIPWLMMG. Residues 777–784 are Cytoplasmic-facing; it reads EILPAKIR. Residues 785 to 803 traverse the membrane as a helical segment; sequence GSAASVATAFNWTCTFVVT. At 804–816 the chain is on the extracellular side; it reads KTFQDMLDVIGSY. Residues 817 to 837 form a helical membrane-spanning segment; that stretch reads GAFWLFGAICFIGLFFVIIYV. Residues 838–872 lie on the Cytoplasmic side of the membrane; sequence PETQGKTLEDIERKMMGRVRRMSSVANIKPLSFNM. Phosphoserine is present on residues serine 860 and serine 861.

The protein belongs to the major facilitator superfamily. Sugar transporter (TC 2.A.1.1) family. Trehalose transporter subfamily.

Its subcellular location is the cell membrane. In terms of biological role, low-capacity facilitative transporter for trehalose. Does not transport maltose, sucrose or lactose. Mediates the bidirectional transfer of trehalose. Responsible for the transport of trehalose synthesized in the fat body and the incorporation of trehalose into other tissues that require a carbon source, thereby regulating trehalose levels in the hemolymph. This chain is Facilitated trehalose transporter Tret1, found in Drosophila willistoni (Fruit fly).